The primary structure comprises 239 residues: Ribonuclease PH (239 aa).

Phosphate contacts are provided by residues R87 and 125–127; that span reads GTR.

Belongs to the RNase PH family. As to quaternary structure, homohexameric ring arranged as a trimer of dimers.

The enzyme catalyses tRNA(n+1) + phosphate = tRNA(n) + a ribonucleoside 5'-diphosphate. Functionally, phosphorolytic 3'-5' exoribonuclease that plays an important role in tRNA 3'-end maturation. Removes nucleotide residues following the 3'-CCA terminus of tRNAs; can also add nucleotides to the ends of RNA molecules by using nucleoside diphosphates as substrates, but this may not be physiologically important. Probably plays a role in initiation of 16S rRNA degradation (leading to ribosome degradation) during starvation. This Azotobacter vinelandii (strain DJ / ATCC BAA-1303) protein is Ribonuclease PH.